The sequence spans 92 residues: Small ribosomal subunit protein uS19 (92 aa).

This sequence belongs to the universal ribosomal protein uS19 family.

Protein S19 forms a complex with S13 that binds strongly to the 16S ribosomal RNA. In Vibrio atlanticus (strain LGP32) (Vibrio splendidus (strain Mel32)), this protein is Small ribosomal subunit protein uS19.